Here is a 360-residue protein sequence, read N- to C-terminus: Beta-1,3-N-acetylglucosaminyltransferase manic fringe (360 aa).

Topologically, residues 1 to 5 (MILRR) are cytoplasmic. The helical; Signal-anchor for type II membrane protein transmembrane segment at 6-26 (LFHVLPAFAFTLFILVLLDLQ) threads the bilayer. Residues 27–360 (LRTRSDQKPQ…ALSWNQHVMH (334 aa)) lie on the Lumenal side of the membrane. The disordered stretch occupies residues 51–74 (TTAENQHRDGAHEKEKAEGQKWTE). The span at 55-74 (NQHRDGAHEKEKAEGQKWTE) shows a compositional bias: basic and acidic residues. A substrate-binding site is contributed by Arg100. Cystine bridges form between Cys139–Cys150 and Cys168–Cys231. Asp172 is a binding site for substrate. Asp173 provides a ligand contact to Mn(2+). Asn214 is a glycosylation site (N-linked (GlcNAc...) asparagine). Asp261 is an active-site residue. Mn(2+) is bound at residue His285. Cys335 and Cys344 are disulfide-bonded.

The protein belongs to the glycosyltransferase 31 family. Mn(2+) serves as cofactor.

The protein localises to the golgi apparatus membrane. It carries out the reaction 3-O-(alpha-L-fucosyl)-L-threonyl-[EGF-like domain protein] + UDP-N-acetyl-alpha-D-glucosamine = 3-O-(N-acetyl-beta-D-glucosaminyl-(1-&gt;3)-alpha-L-fucosyl)-L-threonyl-[EGF-like domain protein] + UDP + H(+). The enzyme catalyses 3-O-(alpha-L-fucosyl)-L-seryl-[EGF-like domain protein] + UDP-N-acetyl-alpha-D-glucosamine = 3-O-(N-acetyl-beta-D-glucosaminyl-(1-&gt;3)-alpha-L-fucosyl)-L-seryl-[EGF-like domain protein] + UDP + H(+). Glycosyltransferase that initiates the elongation of O-linked fucose residues attached to EGF-like repeats in the extracellular domain of Notch molecules. This Danio rerio (Zebrafish) protein is Beta-1,3-N-acetylglucosaminyltransferase manic fringe.